The chain runs to 262 residues: Probable esterase azaC (262 aa).

Catalysis depends on charge relay system residues Ser-119, Asp-188, and His-216.

Belongs to the LovG family.

Its pathway is secondary metabolite biosynthesis. In terms of biological role, probable esterase; part of the gene cluster that mediates the biosynthesis of azaphilones, a class of fungal metabolites characterized by a highly oxygenated pyrano-quinone bicyclic core and exhibiting a broad range of bioactivities. In the first step, the non-reducing polyketide synthase azaA forms the hexaketide precursor from successive condensations of five malonyl-CoA units, presumably with a simple acetyl-CoA starter unit. The reactive polyketide chain then undergoes a PT-mediated C2-C7 cyclization to afford the aromatic ring and is eventually released as an aldehyde through the R-domain. The putative ketoreductase azaE is proposed to catalyze the reduction of the terminal ketone resulting in the early culture product FK17-P2a. The monooxygenase azaH was demonstrated to be the only enzyme required to convert FK17-P2a to azanigerone E. AzaH first hydroxylates the benzaldehyde intermediate FK17-P2a at C4, which triggers the formation of the pyran-ring to afford azanigerone E. In parallel, the 2,4-dimethylhexanoyl chain is synthesized by the HR-PKS azaB and is proposed to be transferred to the C4-hydroxyl of azanigerone E by the acyltransferase azaD directly from the ACP domain of azaB. Alternatively, the 2,4-dimethyl-hexanoyl chain may be offloaded from the HR-PKS as a carboxylic acid and converted to an acyl-CoA by azaF. The resulting acyl-CoA molecule could then be taken up as a substrate by AzaD to form azanigerone B. To yield the carboxylic acid substituent in azanigerone A, the hydroxypropyl side chain of azanigerone B would need to undergo a C-C oxidative cleavage catalyzed by cytochrome P450 AzaI. AzaI is proposed to act on a vicinal diol that leads to a C-C bond scission either through an alkoxyradical intermediate or a peroxy complex. In the biosynthesis of azanigerone A, azanigerone B first undergoes hydroxylation at C10, possibly catalyzed by one of the two FAD-dependent monooxygenases encoded in the cluster, azaG or azaL, resulting in the vicinal diol azanigerone C. Oxidative cleavage of azanigerone C by azaI would yield the corresponding aldehyde derivative of azanigerone A. Finally, the dehydrogenase azaJ is proposed to convert the aldehyde functional group into the carboxylic acid, completing the conversion from azanigerone B to azanigerone A. Alternatively, the oxidation of aldehyde to carboxylic acid may be catalyzed by the same P450 enzyme azaI via consecutive oxidation or by endogenous alcohol dehydrogenase. The chain is Probable esterase azaC from Aspergillus niger (strain ATCC 1015 / CBS 113.46 / FGSC A1144 / LSHB Ac4 / NCTC 3858a / NRRL 328 / USDA 3528.7).